A 409-amino-acid polypeptide reads, in one-letter code: Probable peptidoglycan glycosyltransferase FtsW (409 aa).

Transmembrane regions (helical) follow at residues 42-62, 72-92, 108-128, 135-155, 178-198, 213-233, 303-323, 337-357, and 368-388; these read LFTL…SASL, PFHF…VMLA, LLLL…EVNG, VGPI…IYMA, LLFI…VVVL, LWQF…LIIV, FLGV…ALII, YLAY…IGVA, and LPLV…VGLL.

It belongs to the SEDS family. FtsW subfamily.

It localises to the cell inner membrane. The catalysed reaction is [GlcNAc-(1-&gt;4)-Mur2Ac(oyl-L-Ala-gamma-D-Glu-L-Lys-D-Ala-D-Ala)](n)-di-trans,octa-cis-undecaprenyl diphosphate + beta-D-GlcNAc-(1-&gt;4)-Mur2Ac(oyl-L-Ala-gamma-D-Glu-L-Lys-D-Ala-D-Ala)-di-trans,octa-cis-undecaprenyl diphosphate = [GlcNAc-(1-&gt;4)-Mur2Ac(oyl-L-Ala-gamma-D-Glu-L-Lys-D-Ala-D-Ala)](n+1)-di-trans,octa-cis-undecaprenyl diphosphate + di-trans,octa-cis-undecaprenyl diphosphate + H(+). It functions in the pathway cell wall biogenesis; peptidoglycan biosynthesis. Functionally, peptidoglycan polymerase that is essential for cell division. The protein is Probable peptidoglycan glycosyltransferase FtsW of Idiomarina loihiensis (strain ATCC BAA-735 / DSM 15497 / L2-TR).